The chain runs to 393 residues: Probable acetyl-CoA acetyltransferase (393 aa).

Residue C88 is the Acyl-thioester intermediate of the active site. Catalysis depends on proton acceptor residues H349 and C379.

This sequence belongs to the thiolase-like superfamily. Thiolase family.

It catalyses the reaction 2 acetyl-CoA = acetoacetyl-CoA + CoA. The chain is Probable acetyl-CoA acetyltransferase (fadA4) from Mycobacterium leprae (strain TN).